A 302-amino-acid polypeptide reads, in one-letter code: MPGLWRQRLPSAWALLLLPFLPLLLPAAPAPHRGSYKPVIVVHGLFDSSYSFRHLLDYINETHPGTVVTVLDLFDGRESLRPLWEQVQGFREAVVPIMEKAPEGVHLICYSQGGLVCRALLSVMDEHNVDSFISLSSPQMGQYGDTDYLKWLFPTSMRSNLYRICYSPWGQEFSICNYWHDPHHDDLYLNASSFLALINGERDHPNATAWRKNFLRVGRLVLIGGPDDGVITPWQSSFFGFYDANETVLEMEEQPVYLRDSFGLKTLLARGAIVRCPMAGVSHTTWHSNRTLYDACIEPWLS.

Residues 1 to 27 form the signal peptide; the sequence is MPGLWRQRLPSAWALLLLPFLPLLLPA. A glycan (N-linked (GlcNAc...) asparagine) is linked at Asn-60. Disulfide bonds link Cys-109–Cys-117 and Cys-165–Cys-176. The Nucleophile role is filled by Ser-111. N-linked (GlcNAc...) asparagine glycosylation is found at Asn-190 and Asn-206. Residue Asp-228 is part of the active site. Residue Asn-245 is glycosylated (N-linked (GlcNAc...) asparagine). A disulfide bridge connects residues Cys-276 and Cys-296. Residue His-283 is part of the active site. A glycan (N-linked (GlcNAc...) asparagine) is linked at Asn-289.

It belongs to the palmitoyl-protein thioesterase family.

It localises to the lysosome. The catalysed reaction is hexadecanoyl-CoA + H2O = hexadecanoate + CoA + H(+). The enzyme catalyses S-hexadecanoyl-N-acetylcysteamine + H2O = N-acetylcysteamine + hexadecanoate + H(+). In terms of biological role, catalyzes the cleavage of thioester bonds from S-palmitoyl-CoA or S-palmitoyl-N-acetylcysteamine (unbranched structures) but does not have activity against palmitoylcysteine or palmitoylated proteins, branched structures or bulky head groups. Conversely, hydrolyzes both long and short chain fatty acyl-CoA substrate. The polypeptide is Lysosomal thioesterase PPT2 (Ppt2) (Rattus norvegicus (Rat)).